The sequence spans 263 residues: 3-methyl-2-oxobutanoate hydroxymethyltransferase (263 aa).

Mg(2+) is bound by residues Asp45 and Asp84. Residues Asp45–Ser46, Asp84, and Lys112 contribute to the 3-methyl-2-oxobutanoate site. Residue Glu114 coordinates Mg(2+). Residue Glu180 is the Proton acceptor of the active site.

This sequence belongs to the PanB family. Homodecamer; pentamer of dimers. Mg(2+) serves as cofactor.

It is found in the cytoplasm. It catalyses the reaction 3-methyl-2-oxobutanoate + (6R)-5,10-methylene-5,6,7,8-tetrahydrofolate + H2O = 2-dehydropantoate + (6S)-5,6,7,8-tetrahydrofolate. The protein operates within cofactor biosynthesis; (R)-pantothenate biosynthesis; (R)-pantoate from 3-methyl-2-oxobutanoate: step 1/2. Catalyzes the reversible reaction in which hydroxymethyl group from 5,10-methylenetetrahydrofolate is transferred onto alpha-ketoisovalerate to form ketopantoate. The sequence is that of 3-methyl-2-oxobutanoate hydroxymethyltransferase from Salmonella enteritidis PT4 (strain P125109).